We begin with the raw amino-acid sequence, 142 residues long: Anti-sigma F factor (142 aa).

This sequence belongs to the anti-sigma-factor family.

It carries out the reaction L-seryl-[protein] + ATP = O-phospho-L-seryl-[protein] + ADP + H(+). It catalyses the reaction L-threonyl-[protein] + ATP = O-phospho-L-threonyl-[protein] + ADP + H(+). Binds to sigma F and blocks its ability to form an RNA polymerase holoenzyme (E-sigma F). Phosphorylates SpoIIAA on a serine residue. This phosphorylation may enable SpoIIAA to act as an anti-anti-sigma factor that counteracts SpoIIAB and thus releases sigma F from inhibition. In Clostridium kluyveri (strain NBRC 12016), this protein is Anti-sigma F factor.